A 530-amino-acid chain; its full sequence is UPF0422 protein lpp3030 (530 aa).

The first 19 residues, 1–19 (MKFKKIILALACLSSPLYA), serve as a signal peptide directing secretion. A coiled-coil region spans residues 20 to 66 (DQDQQLKSEIQRLQHQAEDLQAQLNRLQKQLANHKSSQQKHEQQAAA). Positions 50–81 (LANHKSSQQKHEQQAAAKPAEPKSKPTTKSGA) are disordered. Low complexity predominate over residues 63 to 79 (QAAAKPAEPKSKPTTKS).

It belongs to the UPF0422 family.

The chain is UPF0422 protein lpp3030 from Legionella pneumophila (strain Paris).